A 901-amino-acid polypeptide reads, in one-letter code: Protein translocase subunit SecA (901 aa).

ATP contacts are provided by residues Gln-89, 107–111, and Asp-502; that span reads GEGKT. Zn(2+) is bound by residues Cys-884, Cys-886, Cys-895, and His-896.

It belongs to the SecA family. Monomer and homodimer. Part of the essential Sec protein translocation apparatus which comprises SecA, SecYEG and auxiliary proteins SecDF-YajC and YidC. Requires Zn(2+) as cofactor.

It is found in the cell inner membrane. The protein resides in the cytoplasm. It catalyses the reaction ATP + H2O + cellular proteinSide 1 = ADP + phosphate + cellular proteinSide 2.. Functionally, part of the Sec protein translocase complex. Interacts with the SecYEG preprotein conducting channel. Has a central role in coupling the hydrolysis of ATP to the transfer of proteins into and across the cell membrane, serving both as a receptor for the preprotein-SecB complex and as an ATP-driven molecular motor driving the stepwise translocation of polypeptide chains across the membrane. This Sinorhizobium fredii (strain NBRC 101917 / NGR234) protein is Protein translocase subunit SecA.